Consider the following 176-residue polypeptide: Siroheme decarboxylase alpha subunit (176 aa).

Positions 1 to 24 (MTEAHNACCHPSGTAAGHHGAGKA) are disordered. Residues 12–24 (SGTAAGHHGAGKA) are compositionally biased toward low complexity.

This sequence belongs to the Ahb/Nir family. Forms a heterodimer composed of AhbA and AhbB. Also forms heterotetramers.

The enzyme catalyses siroheme + 2 H(+) = 12,18-didecarboxysiroheme + 2 CO2. It participates in porphyrin-containing compound metabolism; protoheme biosynthesis. Functionally, involved in siroheme-dependent heme b biosynthesis. Catalyzes the decarboxylation of siroheme into didecarboxysiroheme. The sequence is that of Siroheme decarboxylase alpha subunit from Nitratidesulfovibrio vulgaris (strain ATCC 29579 / DSM 644 / CCUG 34227 / NCIMB 8303 / VKM B-1760 / Hildenborough) (Desulfovibrio vulgaris).